Consider the following 460-residue polypeptide: Bifunctional protein GlmU (460 aa).

A pyrophosphorylase region spans residues 1 to 235 (MALSAAIVLA…PLTVEGVNDR (235 aa)). UDP-N-acetyl-alpha-D-glucosamine-binding positions include 9 to 12 (LAAG), K23, Q76, and 81 to 82 (GT). D109 provides a ligand contact to Mg(2+). The UDP-N-acetyl-alpha-D-glucosamine site is built by G146, E161, N176, and N233. N233 lines the Mg(2+) pocket. Positions 236 to 256 (VQLAALSKTYNRRVCERWMRD) are linker. Residues 257–460 (GVTILDPETT…VEGWKPAWER (204 aa)) are N-acetyltransferase. UDP-N-acetyl-alpha-D-glucosamine is bound by residues R338 and K356. The active-site Proton acceptor is the H368. Positions 371 and 382 each coordinate UDP-N-acetyl-alpha-D-glucosamine. Acetyl-CoA is bound by residues 391–392 (NY) and A428.

This sequence in the N-terminal section; belongs to the N-acetylglucosamine-1-phosphate uridyltransferase family. It in the C-terminal section; belongs to the transferase hexapeptide repeat family. Homotrimer. Mg(2+) serves as cofactor.

It is found in the cytoplasm. It catalyses the reaction alpha-D-glucosamine 1-phosphate + acetyl-CoA = N-acetyl-alpha-D-glucosamine 1-phosphate + CoA + H(+). The catalysed reaction is N-acetyl-alpha-D-glucosamine 1-phosphate + UTP + H(+) = UDP-N-acetyl-alpha-D-glucosamine + diphosphate. The protein operates within nucleotide-sugar biosynthesis; UDP-N-acetyl-alpha-D-glucosamine biosynthesis; N-acetyl-alpha-D-glucosamine 1-phosphate from alpha-D-glucosamine 6-phosphate (route II): step 2/2. It functions in the pathway nucleotide-sugar biosynthesis; UDP-N-acetyl-alpha-D-glucosamine biosynthesis; UDP-N-acetyl-alpha-D-glucosamine from N-acetyl-alpha-D-glucosamine 1-phosphate: step 1/1. Its pathway is bacterial outer membrane biogenesis; LPS lipid A biosynthesis. Functionally, catalyzes the last two sequential reactions in the de novo biosynthetic pathway for UDP-N-acetylglucosamine (UDP-GlcNAc). The C-terminal domain catalyzes the transfer of acetyl group from acetyl coenzyme A to glucosamine-1-phosphate (GlcN-1-P) to produce N-acetylglucosamine-1-phosphate (GlcNAc-1-P), which is converted into UDP-GlcNAc by the transfer of uridine 5-monophosphate (from uridine 5-triphosphate), a reaction catalyzed by the N-terminal domain. In Bifidobacterium longum (strain NCC 2705), this protein is Bifunctional protein GlmU.